Reading from the N-terminus, the 114-residue chain is U5-lycotoxin-Ls1a (114 aa).

Residues 1-20 (MKYQILFGVVFLTLLSYCYS) form the signal peptide. The propeptide occupies 21 to 45 (EIEDEFENFVDEEMVEADDPFSLAR). 3 cysteine pairs are disulfide-bonded: C51–C66, C65–C93, and C77–C91.

The protein belongs to the neurotoxin 19 (CSTX) family. 04 (U1-Lctx) subfamily. In terms of tissue distribution, expressed by the venom gland.

It localises to the secreted. This Lycosa singoriensis (Wolf spider) protein is U5-lycotoxin-Ls1a.